A 283-amino-acid chain; its full sequence is Phosphatidylserine decarboxylase proenzyme (283 aa).

Catalysis depends on charge relay system; for autoendoproteolytic cleavage activity residues D88, H145, and S248. S248 acts as the Schiff-base intermediate with substrate; via pyruvic acid; for decarboxylase activity in catalysis. S248 is subject to Pyruvic acid (Ser); by autocatalysis.

It belongs to the phosphatidylserine decarboxylase family. PSD-B subfamily. Prokaryotic type I sub-subfamily. In terms of assembly, heterodimer of a large membrane-associated beta subunit and a small pyruvoyl-containing alpha subunit. It depends on pyruvate as a cofactor. Is synthesized initially as an inactive proenzyme. Formation of the active enzyme involves a self-maturation process in which the active site pyruvoyl group is generated from an internal serine residue via an autocatalytic post-translational modification. Two non-identical subunits are generated from the proenzyme in this reaction, and the pyruvate is formed at the N-terminus of the alpha chain, which is derived from the carboxyl end of the proenzyme. The autoendoproteolytic cleavage occurs by a canonical serine protease mechanism, in which the side chain hydroxyl group of the serine supplies its oxygen atom to form the C-terminus of the beta chain, while the remainder of the serine residue undergoes an oxidative deamination to produce ammonia and the pyruvoyl prosthetic group on the alpha chain. During this reaction, the Ser that is part of the protease active site of the proenzyme becomes the pyruvoyl prosthetic group, which constitutes an essential element of the active site of the mature decarboxylase.

Its subcellular location is the cell membrane. The enzyme catalyses a 1,2-diacyl-sn-glycero-3-phospho-L-serine + H(+) = a 1,2-diacyl-sn-glycero-3-phosphoethanolamine + CO2. Its pathway is phospholipid metabolism; phosphatidylethanolamine biosynthesis; phosphatidylethanolamine from CDP-diacylglycerol: step 2/2. Functionally, catalyzes the formation of phosphatidylethanolamine (PtdEtn) from phosphatidylserine (PtdSer). This is Phosphatidylserine decarboxylase proenzyme from Methylibium petroleiphilum (strain ATCC BAA-1232 / LMG 22953 / PM1).